A 143-amino-acid polypeptide reads, in one-letter code: Papain inhibitor (143 aa).

The first 33 residues, 1 to 33 (MREFRRVRRVRFAACALVAAATGITLAAGPASA), serve as a signal peptide directing secretion.

Monomer.

Its subcellular location is the secreted. Stress protein produced under hyperthermal stress conditions. Serves as a glutamine and lysine donor substrate for transglutaminase. Inhibits the cysteine proteases papain and bromelain as well as the bovine serine protease trypsin. Has hardly any or no effect on subtilisin, bovine chymotrypsin, proteinase K from T.album, transglutaminase-activating metalloproteinase (TAMEP) from S.mobaraensis, dispase from B.polymyxa, thermolysin from B.thermoproteolyticus or collagenase from C.histolyticum. The chain is Papain inhibitor (pi) from Streptomyces mobaraensis (Streptoverticillium mobaraense).